A 148-amino-acid polypeptide reads, in one-letter code: MQLHNLEYKKGSRNHKEKRVGRGHGSGLGKTSGRGQDGQKARKSGMVRLAFEGGQTPLYRRVPKVGFNNDRFANKYNVVTLISLVKYETKELTVEFMYANKIAKNEDLPIKVIGNAVLPSGTVVSAHKFSKGALESISNSKAKAQILE.

A compositionally biased stretch (basic and acidic residues) spans 1–10; sequence MQLHNLEYKK. A disordered region spans residues 1 to 42; it reads MQLHNLEYKKGSRNHKEKRVGRGHGSGLGKTSGRGQDGQKAR. The segment covering 11–22 has biased composition (basic residues); the sequence is GSRNHKEKRVGR. Residues 23 to 36 are compositionally biased toward gly residues; that stretch reads GHGSGLGKTSGRGQ.

This sequence belongs to the universal ribosomal protein uL15 family. Part of the 50S ribosomal subunit.

Functionally, binds to the 23S rRNA. The chain is Large ribosomal subunit protein uL15 from Ureaplasma parvum serovar 3 (strain ATCC 27815 / 27 / NCTC 11736).